A 284-amino-acid polypeptide reads, in one-letter code: Shikimate dehydrogenase (NADP(+)) (284 aa).

Shikimate contacts are provided by residues Ser-20–Ser-22 and Ser-67. The active-site Proton acceptor is Lys-71. NADP(+) is bound at residue Asp-83. Shikimate-binding residues include Asn-92 and Asp-107. Residues Gly-129 to Ala-133 and Ile-227 each bind NADP(+). Tyr-229 contacts shikimate. Gly-250 contributes to the NADP(+) binding site.

Belongs to the shikimate dehydrogenase family. Homodimer.

It catalyses the reaction shikimate + NADP(+) = 3-dehydroshikimate + NADPH + H(+). The protein operates within metabolic intermediate biosynthesis; chorismate biosynthesis; chorismate from D-erythrose 4-phosphate and phosphoenolpyruvate: step 4/7. In terms of biological role, involved in the biosynthesis of the chorismate, which leads to the biosynthesis of aromatic amino acids. Catalyzes the reversible NADPH linked reduction of 3-dehydroshikimate (DHSA) to yield shikimate (SA). In Streptococcus pneumoniae (strain 70585), this protein is Shikimate dehydrogenase (NADP(+)).